We begin with the raw amino-acid sequence, 476 residues long: Ureidoglycolate hydrolase (476 aa).

Positions M1–A25 are cleaved as a signal peptide. 4 residues coordinate Mn(2+): H138, D149, E184, and H254. Substrate contacts are provided by residues E183 to E184, H254 to Q257, H290, N340, R353, Y423 to H424, and H448. The segment at A276–D391 is involved in dimerization. H448 serves as a coordination point for Mn(2+).

The protein belongs to the peptidase M20 family. In terms of assembly, homodimer. The cofactor is Mn(2+). It depends on Ni(2+) as a cofactor. Co(2+) is required as a cofactor.

The protein localises to the endoplasmic reticulum. The enzyme catalyses (S)-ureidoglycolate + H2O + 2 H(+) = glyoxylate + 2 NH4(+) + CO2. It participates in nitrogen metabolism; (S)-allantoin degradation; glyoxylate from (S)-ureidoglycolate: step 1/1. Involved in the catabolism of purine nucleotides. Can use (S)-ureidoglycolate as substrate, but not (R)-ureidoglycolate or allantoate. The sequential activity of AAH, UGLYAH and UAH allows a complete purine breakdown without the intermediate generation of urea. The protein is Ureidoglycolate hydrolase of Arabidopsis thaliana (Mouse-ear cress).